The primary structure comprises 380 residues: O-phospho-L-seryl-tRNA:Cys-tRNA synthase (380 aa).

Residues 86 to 87, Asn192, and 215 to 217 contribute to the pyridoxal 5'-phosphate site; these read AR and SGH. At Lys218 the chain carries N6-(pyridoxal phosphate)lysine.

The protein belongs to the SepCysS family. As to quaternary structure, homodimer. Interacts with SepRS. Pyridoxal 5'-phosphate serves as cofactor.

The enzyme catalyses O-phospho-L-seryl-tRNA(Cys) + hydrogen sulfide + H(+) = L-cysteinyl-tRNA(Cys) + phosphate. Its function is as follows. Converts O-phospho-L-seryl-tRNA(Cys) (Sep-tRNA(Cys)) to L-cysteinyl-tRNA(Cys) (Cys-tRNA(Cys)). This is O-phospho-L-seryl-tRNA:Cys-tRNA synthase from Methanococcus maripaludis (strain C6 / ATCC BAA-1332).